We begin with the raw amino-acid sequence, 244 residues long: Lactate utilization protein A (244 aa).

This sequence belongs to the LutA/YkgE family.

In terms of biological role, is involved in L-lactate degradation and allows cells to grow with lactate as the sole carbon source. The polypeptide is Lactate utilization protein A (Oceanobacillus iheyensis (strain DSM 14371 / CIP 107618 / JCM 11309 / KCTC 3954 / HTE831)).